Reading from the N-terminus, the 308-residue chain is Ribosome maturation factor RimP (308 aa).

Disordered regions lie at residues Met-1–Ala-31, Glu-94–Gly-113, and Asp-249–Arg-308. Over residues Ala-17–Ala-31 the composition is skewed to low complexity. Residues Asp-99–Gly-113 show a composition bias toward gly residues. Acidic residues predominate over residues Asp-249–Tyr-269.

Belongs to the RimP family.

It localises to the cytoplasm. Required for maturation of 30S ribosomal subunits. This Parafrankia sp. (strain EAN1pec) protein is Ribosome maturation factor RimP.